We begin with the raw amino-acid sequence, 116 residues long: PTS system cellobiose-specific EIIA component (116 aa).

Positions 11 to 109 (DDYMGVVMGI…AVEVVGQEQR (99 aa)) constitute a PTS EIIA type-3 domain. His-85 (tele-phosphohistidine intermediate) is an active-site residue. His-85 carries the phosphohistidine; by HPr modification. Asp-88 contacts Mg(2+).

Homotrimer. Mg(2+) serves as cofactor.

The phosphoenolpyruvate-dependent sugar phosphotransferase system (sugar PTS), a major carbohydrate active transport system, catalyzes the phosphorylation of incoming sugar substrates concomitantly with their translocation across the cell membrane. Involved in cellobiose transport with PtcB and CelB. This system can also transport lactose. This Lactococcus lactis subsp. lactis (strain IL1403) (Streptococcus lactis) protein is PTS system cellobiose-specific EIIA component.